Here is a 1312-residue protein sequence, read N- to C-terminus: Bifunctional protein PutA (1312 aa).

Residues 228-574 (LSRSLNRIIG…SFVNRIADNT (347 aa)) form a proline dehydrogenase region. The tract at residues 653–1119 (QPVAEGEMQP…LSSRPQDAVG (467 aa)) is aldehyde dehydrogenase. Active-site residues include glutamate 883 and cysteine 917.

This sequence in the N-terminal section; belongs to the proline dehydrogenase family. In the C-terminal section; belongs to the aldehyde dehydrogenase family. FAD is required as a cofactor.

It catalyses the reaction L-proline + a quinone = (S)-1-pyrroline-5-carboxylate + a quinol + H(+). The catalysed reaction is L-glutamate 5-semialdehyde + NAD(+) + H2O = L-glutamate + NADH + 2 H(+). It functions in the pathway amino-acid degradation; L-proline degradation into L-glutamate; L-glutamate from L-proline: step 1/2. The protein operates within amino-acid degradation; L-proline degradation into L-glutamate; L-glutamate from L-proline: step 2/2. In terms of biological role, oxidizes proline to glutamate for use as a carbon and nitrogen source and also function as a transcriptional repressor of the put operon. The protein is Bifunctional protein PutA (putA) of Klebsiella aerogenes (Enterobacter aerogenes).